We begin with the raw amino-acid sequence, 213 residues long: Uridine kinase (213 aa).

Position 13-20 (13-20 (GGSCSGKT)) interacts with ATP.

The protein belongs to the uridine kinase family.

The protein resides in the cytoplasm. The catalysed reaction is uridine + ATP = UMP + ADP + H(+). It catalyses the reaction cytidine + ATP = CMP + ADP + H(+). Its pathway is pyrimidine metabolism; CTP biosynthesis via salvage pathway; CTP from cytidine: step 1/3. The protein operates within pyrimidine metabolism; UMP biosynthesis via salvage pathway; UMP from uridine: step 1/1. The chain is Uridine kinase (udk) from Mycoplasma pneumoniae (strain ATCC 29342 / M129 / Subtype 1) (Mycoplasmoides pneumoniae).